The primary structure comprises 211 residues: Pyridoxine/pyridoxamine 5'-phosphate oxidase (211 aa).

Substrate contacts are provided by residues 8–11 (RKNY) and K66. Residues 61 to 66 (RIVLLK), 76 to 77 (FT), K83, and Q105 each bind FMN. The substrate site is built by Y123, R127, and S131. Residues 140 to 141 (QS) and W184 contribute to the FMN site. A substrate-binding site is contributed by 190–192 (RLH). R194 provides a ligand contact to FMN.

It belongs to the pyridoxamine 5'-phosphate oxidase family. In terms of assembly, homodimer. The cofactor is FMN.

The enzyme catalyses pyridoxamine 5'-phosphate + O2 + H2O = pyridoxal 5'-phosphate + H2O2 + NH4(+). It carries out the reaction pyridoxine 5'-phosphate + O2 = pyridoxal 5'-phosphate + H2O2. It functions in the pathway cofactor metabolism; pyridoxal 5'-phosphate salvage; pyridoxal 5'-phosphate from pyridoxamine 5'-phosphate: step 1/1. Its pathway is cofactor metabolism; pyridoxal 5'-phosphate salvage; pyridoxal 5'-phosphate from pyridoxine 5'-phosphate: step 1/1. Catalyzes the oxidation of either pyridoxine 5'-phosphate (PNP) or pyridoxamine 5'-phosphate (PMP) into pyridoxal 5'-phosphate (PLP). The chain is Pyridoxine/pyridoxamine 5'-phosphate oxidase from Polynucleobacter asymbioticus (strain DSM 18221 / CIP 109841 / QLW-P1DMWA-1) (Polynucleobacter necessarius subsp. asymbioticus).